A 247-amino-acid chain; its full sequence is 2,3-bisphosphoglycerate-dependent phosphoglycerate mutase (247 aa).

Substrate is bound by residues 8 to 15, 21 to 22, R60, 87 to 90, K98, 114 to 115, and 183 to 184; these read RHGESTWN, TG, ERHY, RR, and GN. H9 functions as the Tele-phosphohistidine intermediate in the catalytic mechanism. Catalysis depends on E87, which acts as the Proton donor/acceptor.

It belongs to the phosphoglycerate mutase family. BPG-dependent PGAM subfamily. In terms of assembly, homodimer.

It carries out the reaction (2R)-2-phosphoglycerate = (2R)-3-phosphoglycerate. It functions in the pathway carbohydrate degradation; glycolysis; pyruvate from D-glyceraldehyde 3-phosphate: step 3/5. Catalyzes the interconversion of 2-phosphoglycerate and 3-phosphoglycerate. The polypeptide is 2,3-bisphosphoglycerate-dependent phosphoglycerate mutase (Paracidovorax citrulli (strain AAC00-1) (Acidovorax citrulli)).